Consider the following 172-residue polypeptide: 3-hydroxydecanoyl-[acyl-carrier-protein] dehydratase (172 aa).

Residue His-71 is part of the active site.

It belongs to the thioester dehydratase family. FabA subfamily. In terms of assembly, homodimer.

It is found in the cytoplasm. It carries out the reaction a (3R)-hydroxyacyl-[ACP] = a (2E)-enoyl-[ACP] + H2O. The enzyme catalyses (3R)-hydroxydecanoyl-[ACP] = (2E)-decenoyl-[ACP] + H2O. It catalyses the reaction (2E)-decenoyl-[ACP] = (3Z)-decenoyl-[ACP]. Its pathway is lipid metabolism; fatty acid biosynthesis. Necessary for the introduction of cis unsaturation into fatty acids. Catalyzes the dehydration of (3R)-3-hydroxydecanoyl-ACP to E-(2)-decenoyl-ACP and then its isomerization to Z-(3)-decenoyl-ACP. Can catalyze the dehydratase reaction for beta-hydroxyacyl-ACPs with saturated chain lengths up to 16:0, being most active on intermediate chain length. The chain is 3-hydroxydecanoyl-[acyl-carrier-protein] dehydratase from Photorhabdus laumondii subsp. laumondii (strain DSM 15139 / CIP 105565 / TT01) (Photorhabdus luminescens subsp. laumondii).